Consider the following 294-residue polypeptide: Phosphatidylserine decarboxylase proenzyme (294 aa).

Residues aspartate 100, histidine 157, and serine 261 each act as charge relay system; for autoendoproteolytic cleavage activity in the active site. Residue serine 261 is the Schiff-base intermediate with substrate; via pyruvic acid; for decarboxylase activity of the active site. Serine 261 is subject to Pyruvic acid (Ser); by autocatalysis.

Belongs to the phosphatidylserine decarboxylase family. PSD-B subfamily. Prokaryotic type I sub-subfamily. In terms of assembly, heterodimer of a large membrane-associated beta subunit and a small pyruvoyl-containing alpha subunit. Requires pyruvate as cofactor. In terms of processing, is synthesized initially as an inactive proenzyme. Formation of the active enzyme involves a self-maturation process in which the active site pyruvoyl group is generated from an internal serine residue via an autocatalytic post-translational modification. Two non-identical subunits are generated from the proenzyme in this reaction, and the pyruvate is formed at the N-terminus of the alpha chain, which is derived from the carboxyl end of the proenzyme. The autoendoproteolytic cleavage occurs by a canonical serine protease mechanism, in which the side chain hydroxyl group of the serine supplies its oxygen atom to form the C-terminus of the beta chain, while the remainder of the serine residue undergoes an oxidative deamination to produce ammonia and the pyruvoyl prosthetic group on the alpha chain. During this reaction, the Ser that is part of the protease active site of the proenzyme becomes the pyruvoyl prosthetic group, which constitutes an essential element of the active site of the mature decarboxylase.

The protein resides in the cell membrane. It carries out the reaction a 1,2-diacyl-sn-glycero-3-phospho-L-serine + H(+) = a 1,2-diacyl-sn-glycero-3-phosphoethanolamine + CO2. It functions in the pathway phospholipid metabolism; phosphatidylethanolamine biosynthesis; phosphatidylethanolamine from CDP-diacylglycerol: step 2/2. In terms of biological role, catalyzes the formation of phosphatidylethanolamine (PtdEtn) from phosphatidylserine (PtdSer). The protein is Phosphatidylserine decarboxylase proenzyme of Mannheimia succiniciproducens (strain KCTC 0769BP / MBEL55E).